Consider the following 505-residue polypeptide: uncharacterized protein (505 aa).

A run of 14 helical transmembrane segments spans residues 9–29, 49–69, 86–106, 122–142, 156–176, 181–201, 235–255, 261–281, 310–330, 341–361, 371–391, 395–415, 435–455, and 464–484; these read ANLT…PFIV, YFSV…SVAA, AASV…AFFI, LSIL…GFGA, IQAV…ACFA, QIQL…FYFF, IGVL…LGAS, AAII…ASLF, LLLA…LTIW, LLFI…LFYI, PAIV…TLSG, LGLY…NAIF, IIGP…IQFI, and LIAT…MLVC.

It localises to the cell membrane. Functionally, may be involved in the production of the exopolysaccharide (EPS) component of the extracellular matrix during biofilm formation. EPS is responsible for the adhesion of chains of cells into bundles. This is an uncharacterized protein from Bacillus subtilis (strain 168).